Reading from the N-terminus, the 308-residue chain is tRNA dimethylallyltransferase (308 aa).

10–17 (GPTASGKT) provides a ligand contact to ATP. 12-17 (TASGKT) provides a ligand contact to substrate. Interaction with substrate tRNA stretches follow at residues 35–38 (DSSL) and 159–163 (QRIFR).

It belongs to the IPP transferase family. Monomer. Mg(2+) serves as cofactor.

The enzyme catalyses adenosine(37) in tRNA + dimethylallyl diphosphate = N(6)-dimethylallyladenosine(37) in tRNA + diphosphate. Functionally, catalyzes the transfer of a dimethylallyl group onto the adenine at position 37 in tRNAs that read codons beginning with uridine, leading to the formation of N6-(dimethylallyl)adenosine (i(6)A). The chain is tRNA dimethylallyltransferase from Francisella tularensis subsp. tularensis (strain FSC 198).